The primary structure comprises 123 residues: MVAIKSLAILALPVMAMASPLVPRTDSPSQCNNGSLQCCNSSMTQDRGNLQIAQGVLGGLLGGLLGLGGLLDLVDLNALIGVQCSPISIVGNANTCTQQTVCCSNNNFNGLIALGCTPININL.

The N-terminal stretch at 1 to 18 is a signal peptide; sequence MVAIKSLAILALPVMAMA. 4 disulfide bridges follow: Cys31-Cys102, Cys38-Cys96, Cys39-Cys84, and Cys103-Cys116. Asn33 and Asn40 each carry an N-linked (GlcNAc...) asparagine glycan.

The protein belongs to the fungal hydrophobin family. As to quaternary structure, self-assembles to form functional amyloid fibrils called rodlets. Self-assembly into fibrillar rodlets occurs spontaneously at hydrophobic:hydrophilic interfaces and the rodlets further associate laterally to form amphipathic monolayers.

Its subcellular location is the secreted. It is found in the cell wall. Its function is as follows. Aerial growth, conidiation, and dispersal of filamentous fungi in the environment rely upon a capability of their secreting small amphipathic proteins called hydrophobins (HPBs) with low sequence identity. Class I can self-assemble into an outermost layer of rodlet bundles on aerial cell surfaces, conferring cellular hydrophobicity that supports fungal growth, development and dispersal; whereas Class II form highly ordered films at water-air interfaces through intermolecular interactions but contribute nothing to the rodlet structure. The chain is Class I hydrophobin pri2 from Cyclocybe aegerita (Black poplar mushroom).